Consider the following 301-residue polypeptide: Phosphoglycolate phosphatase 2 (301 aa).

D19 (nucleophile) is an active-site residue.

It belongs to the HAD-like hydrolase superfamily. CbbY/CbbZ/Gph/YieH family.

The catalysed reaction is 2-phosphoglycolate + H2O = glycolate + phosphate. Dephosphorylates 2-phosphoglycolate, but does not contribute to photorespiratory metabolism. The chain is Phosphoglycolate phosphatase 2 (PGLP2) from Arabidopsis thaliana (Mouse-ear cress).